We begin with the raw amino-acid sequence, 157 residues long: SsrA-binding protein (157 aa).

It belongs to the SmpB family.

It localises to the cytoplasm. Required for rescue of stalled ribosomes mediated by trans-translation. Binds to transfer-messenger RNA (tmRNA), required for stable association of tmRNA with ribosomes. tmRNA and SmpB together mimic tRNA shape, replacing the anticodon stem-loop with SmpB. tmRNA is encoded by the ssrA gene; the 2 termini fold to resemble tRNA(Ala) and it encodes a 'tag peptide', a short internal open reading frame. During trans-translation Ala-aminoacylated tmRNA acts like a tRNA, entering the A-site of stalled ribosomes, displacing the stalled mRNA. The ribosome then switches to translate the ORF on the tmRNA; the nascent peptide is terminated with the 'tag peptide' encoded by the tmRNA and targeted for degradation. The ribosome is freed to recommence translation, which seems to be the essential function of trans-translation. This Elusimicrobium minutum (strain Pei191) protein is SsrA-binding protein.